A 303-amino-acid polypeptide reads, in one-letter code: Ornithine carbamoyltransferase (303 aa).

Residues 53-56 (STRT), Q80, R104, and 131-134 (HPCQ) each bind carbamoyl phosphate. L-ornithine-binding positions include N162, D222, and 226–227 (SM). Carbamoyl phosphate contacts are provided by residues 261-262 (CL) and R289.

The protein belongs to the aspartate/ornithine carbamoyltransferase superfamily. OTCase family.

Its subcellular location is the cytoplasm. The enzyme catalyses carbamoyl phosphate + L-ornithine = L-citrulline + phosphate + H(+). It functions in the pathway amino-acid biosynthesis; L-arginine biosynthesis; L-arginine from L-ornithine and carbamoyl phosphate: step 1/3. Functionally, reversibly catalyzes the transfer of the carbamoyl group from carbamoyl phosphate (CP) to the N(epsilon) atom of ornithine (ORN) to produce L-citrulline. This chain is Ornithine carbamoyltransferase, found in Mesorhizobium japonicum (strain LMG 29417 / CECT 9101 / MAFF 303099) (Mesorhizobium loti (strain MAFF 303099)).